Reading from the N-terminus, the 269-residue chain is Ribonuclease HII (269 aa).

Residues 28-222 (RHVAGADEAG…VSGRRGAPPR (195 aa)) enclose the RNase H type-2 domain. A divalent metal cation-binding residues include Asp-34, Glu-35, and Asp-128.

The protein belongs to the RNase HII family. The cofactor is Mn(2+). It depends on Mg(2+) as a cofactor.

The protein localises to the cytoplasm. The enzyme catalyses Endonucleolytic cleavage to 5'-phosphomonoester.. In terms of biological role, endonuclease that specifically degrades the RNA of RNA-DNA hybrids. This is Ribonuclease HII from Salinispora arenicola (strain CNS-205).